A 473-amino-acid polypeptide reads, in one-letter code: Photosystem II CP43 reaction center protein (473 aa).

The propeptide occupies 1–14 (MKILYSLRRFYHVE). Threonine 15 carries the N-acetylthreonine modification. Threonine 15 is modified (phosphothreonine). 5 helical membrane passes run 69–93 (LFEVAHFVPEKPMYEQGLILLPHLA), 134–155 (LLGPETLEESFPFFGYVWQDRN), 178–200 (KALYFGGVYDTWAPGGGDVRKIT), 255–275 (KPFAWARRAFVWSGEAYLSYS), and 291–312 (WFNNTAYPSEFYGPTGPEASQA). A [CaMn4O5] cluster-binding site is contributed by glutamate 367. The helical transmembrane segment at 447 to 471 (RARAAAAGFEKGIDRDLEPVVYMTP) threads the bilayer.

It belongs to the PsbB/PsbC family. PsbC subfamily. PSII is composed of 1 copy each of membrane proteins PsbA, PsbB, PsbC, PsbD, PsbE, PsbF, PsbH, PsbI, PsbJ, PsbK, PsbL, PsbM, PsbT, PsbX, PsbY, PsbZ, Psb30/Ycf12, at least 3 peripheral proteins of the oxygen-evolving complex and a large number of cofactors. It forms dimeric complexes. Binds multiple chlorophylls and provides some of the ligands for the Ca-4Mn-5O cluster of the oxygen-evolving complex. It may also provide a ligand for a Cl- that is required for oxygen evolution. PSII binds additional chlorophylls, carotenoids and specific lipids. serves as cofactor. In terms of processing, phosphorylated in both bundle sheath and mesophyll cells, phosphorylation increases when cells are grown under high rather than low light regimes (70 vs 900 umol photons/m-2/s).

It is found in the plastid. Its subcellular location is the chloroplast thylakoid membrane. Functionally, one of the components of the core complex of photosystem II (PSII). It binds chlorophyll and helps catalyze the primary light-induced photochemical processes of PSII. PSII is a light-driven water:plastoquinone oxidoreductase, using light energy to abstract electrons from H(2)O, generating O(2) and a proton gradient subsequently used for ATP formation. This is Photosystem II CP43 reaction center protein from Zea mays (Maize).